The sequence spans 205 residues: dITP/XTP pyrophosphatase (205 aa).

A substrate-binding site is contributed by 7–12 (SNNRGK). Mg(2+) contacts are provided by glutamate 39 and aspartate 68. Aspartate 68 acts as the Proton acceptor in catalysis. Residues alanine 69, 154-157 (FGFD), lysine 177, and 182-183 (HR) each bind substrate.

It belongs to the HAM1 NTPase family. As to quaternary structure, homodimer. Requires Mg(2+) as cofactor.

It carries out the reaction XTP + H2O = XMP + diphosphate + H(+). The enzyme catalyses dITP + H2O = dIMP + diphosphate + H(+). The catalysed reaction is ITP + H2O = IMP + diphosphate + H(+). In terms of biological role, pyrophosphatase that catalyzes the hydrolysis of nucleoside triphosphates to their monophosphate derivatives, with a high preference for the non-canonical purine nucleotides XTP (xanthosine triphosphate), dITP (deoxyinosine triphosphate) and ITP. Seems to function as a house-cleaning enzyme that removes non-canonical purine nucleotides from the nucleotide pool, thus preventing their incorporation into DNA/RNA and avoiding chromosomal lesions. The polypeptide is dITP/XTP pyrophosphatase (Acidovorax ebreus (strain TPSY) (Diaphorobacter sp. (strain TPSY))).